A 306-amino-acid polypeptide reads, in one-letter code: D-alanine--D-alanine ligase B (306 aa).

Active-site residues include glutamate 15 and serine 150. The ATP-grasp domain maps to 101 to 303 (KLLWQGAGLP…FSQLVVRILE (203 aa)). Residue 134-189 (ISSLGLPVIVKPSREGSSVGMSKVVAENALQDALRLAFQHDEEVLIEKWLSGPEFT) participates in ATP binding. Residues aspartate 257, glutamate 270, and asparagine 272 each coordinate Mg(2+). Residue serine 281 is part of the active site.

This sequence belongs to the D-alanine--D-alanine ligase family. Monomer. Requires Mg(2+) as cofactor. Mn(2+) is required as a cofactor.

It localises to the cytoplasm. The catalysed reaction is 2 D-alanine + ATP = D-alanyl-D-alanine + ADP + phosphate + H(+). The protein operates within cell wall biogenesis; peptidoglycan biosynthesis. Its function is as follows. Cell wall formation. In Escherichia coli O6:H1 (strain CFT073 / ATCC 700928 / UPEC), this protein is D-alanine--D-alanine ligase B.